We begin with the raw amino-acid sequence, 772 residues long: Acetamidase regulatory protein (772 aa).

The span at 1-16 (MSSTAQKNSLSPTGNG) shows a compositional bias: polar residues. Residues 1–23 (MSSTAQKNSLSPTGNGVTKRKSG) are disordered. Positions 26 to 59 (ACVHCHRRKVRCDARIVGLPCSNCRSSGKTDCRI) form a DNA-binding region, zn(2)-C6 fungal-type. 3 disordered regions span residues 78–99 (RCRP…TISE), 114–148 (AAAP…QECH), and 627–690 (ATSE…QTAV). Low complexity predominate over residues 114–123 (AAAPPASVAP). 2 stretches are compositionally biased toward polar residues: residues 124-144 (NVQS…SPQA) and 634-658 (PFSS…QHSS). Residues 671-686 (LLPSYDSPTPDSTSLP) show a composition bias toward low complexity.

The protein resides in the nucleus. Its function is as follows. Positively regulates the expression of genes involved in the catabolism of certain amides, omega amino acids, and lactams. The chain is Acetamidase regulatory protein (amdR) from Aspergillus fumigatus (strain ATCC MYA-4609 / CBS 101355 / FGSC A1100 / Af293) (Neosartorya fumigata).